The chain runs to 395 residues: S-adenosylmethionine synthase (395 aa).

His-14 is an ATP binding site. Asp-16 provides a ligand contact to Mg(2+). Glu-42 is a binding site for K(+). L-methionine contacts are provided by Glu-55 and Gln-98. Positions 98–108 (QSPDIALGVDK) are flexible loop. ATP is bound by residues 174-176 (DGK), 240-241 (RF), Asp-249, 255-256 (RK), Ala-272, and Lys-276. An L-methionine-binding site is contributed by Asp-249. Lys-280 is an L-methionine binding site.

This sequence belongs to the AdoMet synthase family. As to quaternary structure, homotetramer; dimer of dimers. Requires Mg(2+) as cofactor. The cofactor is K(+).

Its subcellular location is the cytoplasm. The enzyme catalyses L-methionine + ATP + H2O = S-adenosyl-L-methionine + phosphate + diphosphate. Its pathway is amino-acid biosynthesis; S-adenosyl-L-methionine biosynthesis; S-adenosyl-L-methionine from L-methionine: step 1/1. Its function is as follows. Catalyzes the formation of S-adenosylmethionine (AdoMet) from methionine and ATP. The overall synthetic reaction is composed of two sequential steps, AdoMet formation and the subsequent tripolyphosphate hydrolysis which occurs prior to release of AdoMet from the enzyme. This is S-adenosylmethionine synthase from Thermotoga neapolitana (strain ATCC 49049 / DSM 4359 / NBRC 107923 / NS-E).